Reading from the N-terminus, the 206-residue chain is ATP-dependent dethiobiotin synthetase BioD (206 aa).

12-17 (GVGKTI) contributes to the ATP binding site. Threonine 16 lines the Mg(2+) pocket. The active site involves lysine 32. Positions 46 and 98 each coordinate Mg(2+). ATP is bound at residue 98-101 (EGAG).

Belongs to the dethiobiotin synthetase family. In terms of assembly, homodimer. Requires Mg(2+) as cofactor.

The protein resides in the cytoplasm. It catalyses the reaction (7R,8S)-7,8-diammoniononanoate + CO2 + ATP = (4R,5S)-dethiobiotin + ADP + phosphate + 3 H(+). It participates in cofactor biosynthesis; biotin biosynthesis; biotin from 7,8-diaminononanoate: step 1/2. Its function is as follows. Catalyzes a mechanistically unusual reaction, the ATP-dependent insertion of CO2 between the N7 and N8 nitrogen atoms of 7,8-diaminopelargonic acid (DAPA, also called 7,8-diammoniononanoate) to form a ureido ring. The chain is ATP-dependent dethiobiotin synthetase BioD from Novosphingobium aromaticivorans (strain ATCC 700278 / DSM 12444 / CCUG 56034 / CIP 105152 / NBRC 16084 / F199).